A 39-amino-acid chain; its full sequence is MIEPLLCGIVLGLVPITIVGLFVSAWNQYRRESAMPDWE.

Residues 5-25 (LLCGIVLGLVPITIVGLFVSA) traverse the membrane as a helical segment.

This sequence belongs to the PetG family. As to quaternary structure, the 4 large subunits of the cytochrome b6-f complex are cytochrome b6, subunit IV (17 kDa polypeptide, PetD), cytochrome f and the Rieske protein, while the 4 small subunits are PetG, PetL, PetM and PetN. The complex functions as a dimer.

It is found in the cellular thylakoid membrane. Functionally, component of the cytochrome b6-f complex, which mediates electron transfer between photosystem II (PSII) and photosystem I (PSI), cyclic electron flow around PSI, and state transitions. PetG is required for either the stability or assembly of the cytochrome b6-f complex. The chain is Cytochrome b6-f complex subunit 5 from Prochlorococcus marinus (strain MIT 9211).